We begin with the raw amino-acid sequence, 728 residues long: Beta-porphyranase A (728 aa).

Residues 1–22 (MSYKYIFLLSAFTLGVPPGIYC) form the signal peptide. 6 residues coordinate substrate: His53, Lys76, Trp78, Lys87, His114, and Asn151. Glu152 serves as the catalytic Proton donor. 4 residues coordinate substrate: His235, Glu279, Ser326, and Trp331. Glu279 functions as the Nucleophile in the catalytic mechanism. The CBM-cenC domain occupies 599 to 701 (TLQNGTFSEG…AVSFDFNSTV (103 aa)).

Belongs to the glycosyl hydrolase 86 family.

The enzyme catalyses Hydrolysis of beta-D-galactopyranose-(1-&gt;4)-alpha-L-galactopyranose-6-sulfate linkages in porphyran.. Cleaves the sulfated polysaccharide porphyran at the (1-&gt;4) linkages between beta-D-galactopyranose and alpha-L-galactopyranose-6-sulfate, forming mostly the disaccharide alpha-L-galactopyranose-6-sulfate-(1-&gt;3)-beta-D-galactose. Some longer oligosaccharides of even number of residues are also observed. Inactive on the non-sulfated agarose portion of the porphyran backbone. Can also use methylated galactoses. The chain is Beta-porphyranase A from Phocaeicola plebeius (strain DSM 17135 / JCM 12973 / CCUG 54634 / M2) (Bacteroides plebeius).